Here is a 93-residue protein sequence, read N- to C-terminus: WAP four-disulfide core domain protein 13 (93 aa).

An N-terminal signal peptide occupies residues 1–22 (MKPVLPLQFLVVFCLALQLVPG). In terms of domain architecture, WAP; atypical spans 24–73 (PKQRVLKYILEPPPCISAPENCTHLCTMQEDCEKGFQCCSSFCGIVCSSE). Cystine bridges form between cysteine 45-cysteine 66, cysteine 49-cysteine 61, and cysteine 55-cysteine 70.

It localises to the secreted. Putative acid-stable proteinase inhibitor. In Homo sapiens (Human), this protein is WAP four-disulfide core domain protein 13 (WFDC13).